The following is a 284-amino-acid chain: 4-diphosphocytidyl-2-C-methyl-D-erythritol kinase (284 aa).

Residue lysine 14 is part of the active site. Proline 98–serine 108 is a binding site for ATP. Aspartate 140 is a catalytic residue.

The protein belongs to the GHMP kinase family. IspE subfamily.

It carries out the reaction 4-CDP-2-C-methyl-D-erythritol + ATP = 4-CDP-2-C-methyl-D-erythritol 2-phosphate + ADP + H(+). Its pathway is isoprenoid biosynthesis; isopentenyl diphosphate biosynthesis via DXP pathway; isopentenyl diphosphate from 1-deoxy-D-xylulose 5-phosphate: step 3/6. Functionally, catalyzes the phosphorylation of the position 2 hydroxy group of 4-diphosphocytidyl-2C-methyl-D-erythritol. This is 4-diphosphocytidyl-2-C-methyl-D-erythritol kinase from Shewanella baltica (strain OS185).